The chain runs to 89 residues: Small ribosomal subunit protein uS15 (89 aa).

It belongs to the universal ribosomal protein uS15 family. Part of the 30S ribosomal subunit. Forms a bridge to the 50S subunit in the 70S ribosome, contacting the 23S rRNA.

One of the primary rRNA binding proteins, it binds directly to 16S rRNA where it helps nucleate assembly of the platform of the 30S subunit by binding and bridging several RNA helices of the 16S rRNA. Its function is as follows. Forms an intersubunit bridge (bridge B4) with the 23S rRNA of the 50S subunit in the ribosome. In Geobacillus kaustophilus (strain HTA426), this protein is Small ribosomal subunit protein uS15.